The following is a 372-amino-acid chain: Proton-coupled zinc antiporter SLC30A2 (372 aa).

Topologically, residues Met-1–Glu-140 are cytoplasmic. Residues His-51–His-54 carry the Mitochondrial localization signal motif. Zn(2+) is bound by residues Cys-53, His-106, and Asp-110. The chain crosses the membrane as a helical span at residues Ile-141–Leu-161. The Lumenal segment spans residues Ala-162 to Gly-175. The chain crosses the membrane as a helical span at residues Gly-176 to Leu-196. At His-197 to Ala-220 the chain is on the cytoplasmic side. The helical transmembrane segment at Phe-221–Leu-241 threads the bilayer. Residues His-223 and Asp-227 each contribute to the Zn(2+) site. Topologically, residues Tyr-242 to Tyr-249 are lumenal. The chain crosses the membrane as a helical span at residues Val-250 to Leu-270. At Arg-271–His-304 the chain is on the cytoplasmic side. A Lysosomal targeting motif motif is present at residues Leu-294–Leu-295. Phosphoserine is present on Ser-296. Zn(2+) contacts are provided by His-304, His-321, and Glu-355. A helical membrane pass occupies residues Ser-305–Ala-325. Residues Gln-326–Asp-372 lie on the Lumenal side of the membrane.

It belongs to the cation diffusion facilitator (CDF) transporter (TC 2.A.4) family. SLC30A subfamily. In terms of assembly, homodimer. Interacts (via lysosomal targeting motif) with AP3D1; in AP-3-mediated transport to lysosomes. Interacts with TMEM163. Post-translationally, phosphorylated at Ser-296. Phosphorylation at Ser-296 prevents localization to lysosomes. Dephosphorylation of Ser-296 which triggers localization to lysosomes, accumulation of zinc into lysosomes and lysosomal-mediated cell death is induced by TNF-alpha.

It is found in the cytoplasmic vesicle. It localises to the secretory vesicle membrane. The protein resides in the zymogen granule membrane. The protein localises to the endosome membrane. Its subcellular location is the lysosome membrane. It is found in the mitochondrion inner membrane. It localises to the cell membrane. The enzyme catalyses Zn(2+)(in) + 2 H(+)(out) = Zn(2+)(out) + 2 H(+)(in). In terms of biological role, electroneutral proton-coupled antiporter concentrating zinc ions into a variety of intracellular organelles including endosomes, zymogen granules and mitochondria. Thereby, plays a crucial role in cellular zinc homeostasis to confer upon cells protection against its potential cytotoxicity. Regulates the zinc concentration of milk, through the transport of zinc ions into secretory vesicles of mammary cells. By concentrating zinc ions into lysosomes participates to lysosomal-mediated cell death during early mammary gland involution. Electroneutral proton-coupled antiporter mediating the efflux of zinc ions through the plasma membrane. The sequence is that of Proton-coupled zinc antiporter SLC30A2 from Homo sapiens (Human).